Consider the following 473-residue polypeptide: tRNA-2-methylthio-N(6)-dimethylallyladenosine synthase (473 aa).

One can recognise an MTTase N-terminal domain in the interval R5–A125. Residues C14, C50, C88, C166, C170, and C173 each contribute to the [4Fe-4S] cluster site. The Radical SAM core domain occupies R152–A384. A TRAM domain is found at R387–S449. Over residues S453–P462 the composition is skewed to low complexity. Residues S453–V473 form a disordered region.

It belongs to the methylthiotransferase family. MiaB subfamily. In terms of assembly, monomer. Requires [4Fe-4S] cluster as cofactor.

The protein localises to the cytoplasm. It catalyses the reaction N(6)-dimethylallyladenosine(37) in tRNA + (sulfur carrier)-SH + AH2 + 2 S-adenosyl-L-methionine = 2-methylsulfanyl-N(6)-dimethylallyladenosine(37) in tRNA + (sulfur carrier)-H + 5'-deoxyadenosine + L-methionine + A + S-adenosyl-L-homocysteine + 2 H(+). In terms of biological role, catalyzes the methylthiolation of N6-(dimethylallyl)adenosine (i(6)A), leading to the formation of 2-methylthio-N6-(dimethylallyl)adenosine (ms(2)i(6)A) at position 37 in tRNAs that read codons beginning with uridine. The sequence is that of tRNA-2-methylthio-N(6)-dimethylallyladenosine synthase from Nitrobacter hamburgensis (strain DSM 10229 / NCIMB 13809 / X14).